Here is a 520-residue protein sequence, read N- to C-terminus: Glutamate decarboxylase-like protein FG08083 (520 aa).

K86–V88 is a substrate binding site. Position 300 is an N6-(pyridoxal phosphate)lysine (K300). The interval K338 to W357 is disordered. Positions G340–G351 are enriched in polar residues. Substrate is bound at residue R492.

This sequence belongs to the group II decarboxylase family. Pyridoxal 5'-phosphate serves as cofactor.

Its pathway is mycotoxin biosynthesis. Its function is as follows. Glutamate decarboxylase-like protein; part of the gene cluster that mediates the biosynthesis of butenolide, a mycotoxin that shows antibiotic activity but does not seem to play a major role in the spread of head blight in wheat. Butenolide is derived from glutamic acid via a 4-acetamido-2-butenoic acid intermediate. The predicted function of the NADH:flavin oxidoreductase FG08077, the cytochrome P450 monooxygenase FG08079, the decarboxylase FG08083, and the putative acetyltransferase FG08082 are consistent with this pathway, however, the respective activities of the butelonide biosynthesis cluster enzymes have still to be experimentally determined. The protein is Glutamate decarboxylase-like protein FG08083 of Gibberella zeae (strain ATCC MYA-4620 / CBS 123657 / FGSC 9075 / NRRL 31084 / PH-1) (Wheat head blight fungus).